The chain runs to 124 residues: Ribonuclease pancreatic (124 aa).

Residues 1–13 (KESAAAKFERQHM) show a composition bias toward basic and acidic residues. The disordered stretch occupies residues 1 to 24 (KESAAAKFERQHMDSSTSSASSSN). Residues lysine 7 and arginine 10 each coordinate substrate. Catalysis depends on histidine 12, which acts as the Proton acceptor. Intrachain disulfides connect cysteine 26–cysteine 84, cysteine 40–cysteine 95, cysteine 58–cysteine 110, and cysteine 65–cysteine 72. Residues 41 to 45 (KPVNT), lysine 66, and arginine 85 each bind substrate. The Proton donor role is filled by histidine 119.

Belongs to the pancreatic ribonuclease family. Monomer. Interacts with and forms tight 1:1 complexes with RNH1. Dimerization of two such complexes may occur. Interaction with RNH1 inhibits this protein. As to expression, pancreas.

It is found in the secreted. It catalyses the reaction an [RNA] containing cytidine + H2O = an [RNA]-3'-cytidine-3'-phosphate + a 5'-hydroxy-ribonucleotide-3'-[RNA].. It carries out the reaction an [RNA] containing uridine + H2O = an [RNA]-3'-uridine-3'-phosphate + a 5'-hydroxy-ribonucleotide-3'-[RNA].. Its function is as follows. Endonuclease that catalyzes the cleavage of RNA on the 3' side of pyrimidine nucleotides. Acts on single-stranded and double-stranded RNA. In Connochaetes taurinus (Blue wildebeest), this protein is Ribonuclease pancreatic (RNASE1).